Here is a 148-residue protein sequence, read N- to C-terminus: 3-dehydroquinate dehydratase (148 aa).

The active-site Proton acceptor is tyrosine 23. Substrate is bound by residues asparagine 74, histidine 80, and aspartate 87. The Proton donor role is filled by histidine 100. Substrate contacts are provided by residues 101-102 and arginine 111; that span reads IS.

The protein belongs to the type-II 3-dehydroquinase family. Homododecamer.

It catalyses the reaction 3-dehydroquinate = 3-dehydroshikimate + H2O. It participates in metabolic intermediate biosynthesis; chorismate biosynthesis; chorismate from D-erythrose 4-phosphate and phosphoenolpyruvate: step 3/7. In terms of biological role, catalyzes a trans-dehydration via an enolate intermediate. The polypeptide is 3-dehydroquinate dehydratase (Thermoanaerobacter pseudethanolicus (strain ATCC 33223 / 39E) (Clostridium thermohydrosulfuricum)).